The following is a 588-amino-acid chain: Calicin (588 aa).

The 71-residue stretch at 28–98 (WDMALTVDHH…FYSGKVVISE (71 aa)) folds into the BTB domain. The 103-residue stretch at 133–235 (CLRYLFLAEL…NAVSNKTLMF (103 aa)) folds into the BACK domain. S149 bears the Phosphoserine mark. 6 Kelch repeats span residues 280–327 (SVVI…AAGR), 328–375 (YIYI…TCGG), 377–423 (VYSV…TKGD), 425–475 (NLYI…SFHQ), 476–525 (DNIL…IGDS), and 526–580 (KVFV…LAKL).

In terms of assembly, interacts with CYLC1; the interaction may be relevant for proper acrosome attachment to the nuclear envelope. As to expression, expressed in testis and in spermatozoa.

It localises to the cytoplasm. The protein resides in the cytoskeleton. The protein localises to the perinuclear theca. Its subcellular location is the calyx. Required for both nuclear and acrosomal shaping during spermiogenesis. The protein is Calicin (Ccin) of Mus musculus (Mouse).